A 140-amino-acid polypeptide reads, in one-letter code: uncharacterized protein (140 aa).

A run of 4 helical transmembrane segments spans residues 4–24 (LLLA…SFSG), 56–76 (EAFI…YLLW), 84–104 (SAAA…LFFS), and 109–129 (IRDV…YVLA).

Its subcellular location is the cell membrane. May be important for peptidoglycan remodeling. This is an uncharacterized protein from Bacillus subtilis (strain 168).